Consider the following 643-residue polypeptide: 1-deoxy-D-xylulose-5-phosphate synthase (643 aa).

Thiamine diphosphate is bound by residues His-89 and 130–132 (GHS). Residue Asp-161 coordinates Mg(2+). Residues 162-163 (GA), Asn-190, Phe-297, and Glu-380 contribute to the thiamine diphosphate site. Asn-190 contacts Mg(2+).

The protein belongs to the transketolase family. DXPS subfamily. As to quaternary structure, homodimer. Requires Mg(2+) as cofactor. It depends on thiamine diphosphate as a cofactor.

It carries out the reaction D-glyceraldehyde 3-phosphate + pyruvate + H(+) = 1-deoxy-D-xylulose 5-phosphate + CO2. It functions in the pathway metabolic intermediate biosynthesis; 1-deoxy-D-xylulose 5-phosphate biosynthesis; 1-deoxy-D-xylulose 5-phosphate from D-glyceraldehyde 3-phosphate and pyruvate: step 1/1. Functionally, catalyzes the acyloin condensation reaction between C atoms 2 and 3 of pyruvate and glyceraldehyde 3-phosphate to yield 1-deoxy-D-xylulose-5-phosphate (DXP). The chain is 1-deoxy-D-xylulose-5-phosphate synthase from Hahella chejuensis (strain KCTC 2396).